The sequence spans 362 residues: Probable protein phosphatase 2C 24 (362 aa).

The 284-residue stretch at 77–360 (RYGVSSVCGR…DNVSVVVIDL (284 aa)) folds into the PPM-type phosphatase domain. Residues D117, G118, D295, and D351 each contribute to the Mn(2+) site.

The protein belongs to the PP2C family. Mg(2+) is required as a cofactor. The cofactor is Mn(2+).

The catalysed reaction is O-phospho-L-seryl-[protein] + H2O = L-seryl-[protein] + phosphate. It catalyses the reaction O-phospho-L-threonyl-[protein] + H2O = L-threonyl-[protein] + phosphate. The protein is Probable protein phosphatase 2C 24 of Arabidopsis thaliana (Mouse-ear cress).